The sequence spans 254 residues: Thiazole synthase (254 aa).

K95 (schiff-base intermediate with DXP) is an active-site residue. Residues G156, A182–G183, and N204–T205 each bind 1-deoxy-D-xylulose 5-phosphate.

Belongs to the ThiG family. In terms of assembly, homotetramer. Forms heterodimers with either ThiH or ThiS.

The protein resides in the cytoplasm. The enzyme catalyses [ThiS sulfur-carrier protein]-C-terminal-Gly-aminoethanethioate + 2-iminoacetate + 1-deoxy-D-xylulose 5-phosphate = [ThiS sulfur-carrier protein]-C-terminal Gly-Gly + 2-[(2R,5Z)-2-carboxy-4-methylthiazol-5(2H)-ylidene]ethyl phosphate + 2 H2O + H(+). It functions in the pathway cofactor biosynthesis; thiamine diphosphate biosynthesis. Functionally, catalyzes the rearrangement of 1-deoxy-D-xylulose 5-phosphate (DXP) to produce the thiazole phosphate moiety of thiamine. Sulfur is provided by the thiocarboxylate moiety of the carrier protein ThiS. In vitro, sulfur can be provided by H(2)S. The sequence is that of Thiazole synthase from Vibrio atlanticus (strain LGP32) (Vibrio splendidus (strain Mel32)).